The primary structure comprises 369 residues: 2-aminoethylphosphonate--pyruvate transaminase (369 aa).

An N6-(pyridoxal phosphate)lysine modification is found at Lys-193.

Belongs to the class-V pyridoxal-phosphate-dependent aminotransferase family. PhnW subfamily. Homodimer. Requires pyridoxal 5'-phosphate as cofactor.

It catalyses the reaction (2-aminoethyl)phosphonate + pyruvate = phosphonoacetaldehyde + L-alanine. Involved in phosphonate degradation. The chain is 2-aminoethylphosphonate--pyruvate transaminase from Burkholderia pseudomallei (strain 668).